A 386-amino-acid chain; its full sequence is Patatin-2-Kuras 3 (386 aa).

Positions 1 to 23 (MATTKSVLVLFFMILATTSSTCA) are cleaved as a signal peptide. The region spanning 32 to 229 (LSIDGGGIKG…TVGDPALLSL (198 aa)) is the PNPLA domain. Residues 36-41 (GGGIKG) carry the GXGXXG motif. The GXSXG motif lies at 75 to 79 (GTSTG). The Nucleophile role is filled by S77. Residue N115 is glycosylated (N-linked (GlcNAc...) asparagine). D215 functions as the Proton acceptor in the catalytic mechanism. The DGA/G signature appears at 215–217 (DGA). Positions 321–384 (ENALTGTTTE…DRKKLRANKA (64 aa)) form a coiled coil.

It belongs to the patatin family. In terms of tissue distribution, tuber.

Its subcellular location is the vacuole. Its function is as follows. Probable lipolytic acyl hydrolase (LAH), an activity which is thought to be involved in the response of tubers to pathogens. This is Patatin-2-Kuras 3 (pat2-k3) from Solanum tuberosum (Potato).